The sequence spans 194 residues: Methylthioribulose-1-phosphate dehydratase (194 aa).

Zn(2+)-binding residues include histidine 84 and histidine 86.

Belongs to the aldolase class II family. MtnB subfamily. Zn(2+) serves as cofactor.

The catalysed reaction is 5-(methylsulfanyl)-D-ribulose 1-phosphate = 5-methylsulfanyl-2,3-dioxopentyl phosphate + H2O. It functions in the pathway amino-acid biosynthesis; L-methionine biosynthesis via salvage pathway; L-methionine from S-methyl-5-thio-alpha-D-ribose 1-phosphate: step 2/6. Catalyzes the dehydration of methylthioribulose-1-phosphate (MTRu-1-P) into 2,3-diketo-5-methylthiopentyl-1-phosphate (DK-MTP-1-P). The chain is Methylthioribulose-1-phosphate dehydratase from Cronobacter sakazakii (Enterobacter sakazakii).